Consider the following 448-residue polypeptide: Trigger factor (448 aa).

One can recognise a PPIase FKBP-type domain in the interval 162–243 (GDFVQIDLNA…VRTVKEKELP (82 aa)).

Belongs to the FKBP-type PPIase family. Tig subfamily.

It is found in the cytoplasm. The enzyme catalyses [protein]-peptidylproline (omega=180) = [protein]-peptidylproline (omega=0). Involved in protein export. Acts as a chaperone by maintaining the newly synthesized protein in an open conformation. Functions as a peptidyl-prolyl cis-trans isomerase. The sequence is that of Trigger factor from Salinispora arenicola (strain CNS-205).